A 144-amino-acid polypeptide reads, in one-letter code: Protein MIX23 (144 aa).

The residue at position 2 (alanine 2) is an N-acetylalanine. Residues 82-120 are a coiled coil; sequence VKNLREEREKNLDDLTLLKQLRKEQTKLKWMQSELNVEE. Lysine 100 is subject to N6-acetyllysine.

The protein belongs to the MIX23 family.

In Homo sapiens (Human), this protein is Protein MIX23.